A 430-amino-acid chain; its full sequence is MTTIAKILAREILDSRGNPTLEAEVTLADGSFGRAAVPSGASTGTKEAVELRDGDKTRYLGKGVRKAVENVNGTIAETLKDFDAADQQGLDRRLIDLDGTENKGRLGANALLGVSLAAAHAVAASRKQPLWQYLSTITESDVALPVPMMNIINGGAHADNNVDFQEFMVLPVGCSSFSEALRAGTEIFHSLKSVLKGHGLSTAVGDEGGFAPDFRSNVEALDTILEAIGKAGYTAGEDILLGLDVASSEFYDNGKYNLVGENKRLTSEQFVDFLADWVAQYPIISIEDGLAEDDWAGWKLLTDRVGKKVQLVGDDLFVTNPKIFKEGIDSGTANAILIKVNQIGTLTETLEAIAMAHAANYASIVSHRSGETEDTTIADIAVATTATQIKTGSLCRSDRVAKYNQLLRIEQALGSGARYAGRDAFVSLKR.

Q165 provides a ligand contact to (2R)-2-phosphoglycerate. E207 serves as the catalytic Proton donor. Residues D244, E287, and D314 each coordinate Mg(2+). K339, R368, S369, and K390 together coordinate (2R)-2-phosphoglycerate. K339 acts as the Proton acceptor in catalysis.

This sequence belongs to the enolase family. Component of the RNA degradosome, a multiprotein complex involved in RNA processing and mRNA degradation. Mg(2+) is required as a cofactor.

Its subcellular location is the cytoplasm. It is found in the secreted. It localises to the cell surface. The catalysed reaction is (2R)-2-phosphoglycerate = phosphoenolpyruvate + H2O. It functions in the pathway carbohydrate degradation; glycolysis; pyruvate from D-glyceraldehyde 3-phosphate: step 4/5. Catalyzes the reversible conversion of 2-phosphoglycerate (2-PG) into phosphoenolpyruvate (PEP). It is essential for the degradation of carbohydrates via glycolysis. In Xanthomonas campestris pv. campestris (strain 8004), this protein is Enolase.